The chain runs to 445 residues: Exodeoxyribonuclease 7 large subunit (445 aa).

Belongs to the XseA family. In terms of assembly, heterooligomer composed of large and small subunits.

The protein localises to the cytoplasm. It catalyses the reaction Exonucleolytic cleavage in either 5'- to 3'- or 3'- to 5'-direction to yield nucleoside 5'-phosphates.. In terms of biological role, bidirectionally degrades single-stranded DNA into large acid-insoluble oligonucleotides, which are then degraded further into small acid-soluble oligonucleotides. The polypeptide is Exodeoxyribonuclease 7 large subunit (Delftia acidovorans (strain DSM 14801 / SPH-1)).